A 263-amino-acid polypeptide reads, in one-letter code: tRNA pseudouridine synthase A (263 aa).

D54 acts as the Nucleophile in catalysis. Y113 contributes to the substrate binding site.

The protein belongs to the tRNA pseudouridine synthase TruA family. In terms of assembly, homodimer.

It catalyses the reaction uridine(38/39/40) in tRNA = pseudouridine(38/39/40) in tRNA. Formation of pseudouridine at positions 38, 39 and 40 in the anticodon stem and loop of transfer RNAs. This Lactobacillus helveticus (strain DPC 4571) protein is tRNA pseudouridine synthase A.